The chain runs to 303 residues: Mycothiol acetyltransferase (303 aa).

N-acetyltransferase domains follow at residues 1-150 (MALL…RPLD) and 162-303 (VTIR…QFGR). A 1D-myo-inositol 2-(L-cysteinylamino)-2-deoxy-alpha-D-glucopyranoside-binding site is contributed by Glu18. Acetyl-CoA is bound at residue 77–79 (LAV). Positions 189, 229, and 237 each coordinate 1D-myo-inositol 2-(L-cysteinylamino)-2-deoxy-alpha-D-glucopyranoside. Residues 241-243 (VGV) and 248-254 (QGNGLGR) contribute to the acetyl-CoA site. Tyr275 is a binding site for 1D-myo-inositol 2-(L-cysteinylamino)-2-deoxy-alpha-D-glucopyranoside. 280-285 (NTAAIK) contributes to the acetyl-CoA binding site.

The protein belongs to the acetyltransferase family. MshD subfamily. Monomer.

The catalysed reaction is 1D-myo-inositol 2-(L-cysteinylamino)-2-deoxy-alpha-D-glucopyranoside + acetyl-CoA = mycothiol + CoA + H(+). Catalyzes the transfer of acetyl from acetyl-CoA to desacetylmycothiol (Cys-GlcN-Ins) to form mycothiol. The polypeptide is Mycothiol acetyltransferase (Saccharopolyspora erythraea (strain ATCC 11635 / DSM 40517 / JCM 4748 / NBRC 13426 / NCIMB 8594 / NRRL 2338)).